The chain runs to 521 residues: ATP synthase subunit beta (521 aa).

Composition is skewed to low complexity over residues 1–21 (MAKAATPKTTAAAEAKPAAKA) and 28–42 (PKTTAAAKPAATKSG). Residues 1 to 42 (MAKAATPKTTAAAEAKPAAKAPAKKAAPKTTAAAKPAATKSG) are disordered. 199–206 (GGAGVGKT) contacts ATP.

It belongs to the ATPase alpha/beta chains family. As to quaternary structure, F-type ATPases have 2 components, CF(1) - the catalytic core - and CF(0) - the membrane proton channel. CF(1) has five subunits: alpha(3), beta(3), gamma(1), delta(1), epsilon(1). CF(0) has three main subunits: a(1), b(2) and c(9-12). The alpha and beta chains form an alternating ring which encloses part of the gamma chain. CF(1) is attached to CF(0) by a central stalk formed by the gamma and epsilon chains, while a peripheral stalk is formed by the delta and b chains.

It is found in the cell inner membrane. It carries out the reaction ATP + H2O + 4 H(+)(in) = ADP + phosphate + 5 H(+)(out). In terms of biological role, produces ATP from ADP in the presence of a proton gradient across the membrane. The catalytic sites are hosted primarily by the beta subunits. This chain is ATP synthase subunit beta, found in Brucella abortus (strain 2308).